Consider the following 79-residue polypeptide: Ornithine decarboxylase (79 aa).

Pyridoxal 5'-phosphate-binding positions include S8, G45, and 75–78; that span reads EPGR.

Belongs to the Orn/Lys/Arg decarboxylase class-II family. In terms of assembly, homodimer. Only the dimer is catalytically active, as the active sites are constructed of residues from both monomers. Pyridoxal 5'-phosphate is required as a cofactor.

It localises to the cytoplasm. The catalysed reaction is L-ornithine + H(+) = putrescine + CO2. Its pathway is amine and polyamine biosynthesis; putrescine biosynthesis via L-ornithine pathway; putrescine from L-ornithine: step 1/1. Inhibited by antizyme (AZ) OAZ1 in response to polyamine levels. AZ inhibits the assembly of the functional homodimer by binding to ODC monomers and targeting them for ubiquitin-independent proteolytic destruction by the 26S proteasome. Catalyzes the first and rate-limiting step of polyamine biosynthesis that converts ornithine into putrescine, which is the precursor for the polyamines, spermidine and spermine. Polyamines are essential for cell proliferation and are implicated in cellular processes, ranging from DNA replication to apoptosis. The protein is Ornithine decarboxylase (ODC) of Paracoccidioides brasiliensis.